Here is a 520-residue protein sequence, read N- to C-terminus: Cytochrome P450 6d3 (520 aa).

Position 461 (C461) interacts with heme.

Belongs to the cytochrome P450 family. Heme is required as a cofactor.

The protein resides in the endoplasmic reticulum membrane. Its subcellular location is the microsome membrane. In terms of biological role, metabolizes pyrethroid insecticides and other xenobiotics. The polypeptide is Cytochrome P450 6d3 (CYP6D3) (Musca domestica (House fly)).